A 162-amino-acid chain; its full sequence is Small ribosomal subunit protein uS19 (162 aa).

Residues 1-27 (MAKQKKFSGKGSARSKRKQNRKQVGPR) show a composition bias toward basic residues. Residues 1-29 (MAKQKKFSGKGSARSKRKQNRKQVGPRRR) are disordered.

This sequence belongs to the universal ribosomal protein uS19 family.

Its function is as follows. Protein S19 forms a complex with S13 that binds strongly to the 16S ribosomal RNA. This chain is Small ribosomal subunit protein uS19, found in Methanococcus aeolicus (strain ATCC BAA-1280 / DSM 17508 / OCM 812 / Nankai-3).